Here is a 471-residue protein sequence, read N- to C-terminus: Adenosylhomocysteinase (471 aa).

Residues threonine 60, aspartate 135, and glutamate 196 each coordinate substrate. 197–199 (TTT) provides a ligand contact to NAD(+). Residues lysine 226 and aspartate 230 each contribute to the substrate site. Residues asparagine 231, 260 to 265 (GYGDVG), glutamate 283, asparagine 318, 339 to 341 (IGH), and asparagine 387 contribute to the NAD(+) site.

The protein belongs to the adenosylhomocysteinase family. It depends on NAD(+) as a cofactor.

The protein localises to the cytoplasm. The enzyme catalyses S-adenosyl-L-homocysteine + H2O = L-homocysteine + adenosine. It functions in the pathway amino-acid biosynthesis; L-homocysteine biosynthesis; L-homocysteine from S-adenosyl-L-homocysteine: step 1/1. May play a key role in the regulation of the intracellular concentration of adenosylhomocysteine. The sequence is that of Adenosylhomocysteinase from Chlorobium phaeobacteroides (strain DSM 266 / SMG 266 / 2430).